A 331-amino-acid polypeptide reads, in one-letter code: Glycerol-3-phosphate dehydrogenase [NAD(P)+] (331 aa).

NADPH is bound by residues W13, R33, and K103. Sn-glycerol 3-phosphate-binding residues include K103, G131, and T133. NADPH is bound at residue A135. Residues K187, D240, S250, R251, and N252 each coordinate sn-glycerol 3-phosphate. K187 serves as the catalytic Proton acceptor. R251 is an NADPH binding site. Residues V275 and E277 each coordinate NADPH.

It belongs to the NAD-dependent glycerol-3-phosphate dehydrogenase family.

Its subcellular location is the cytoplasm. The enzyme catalyses sn-glycerol 3-phosphate + NAD(+) = dihydroxyacetone phosphate + NADH + H(+). The catalysed reaction is sn-glycerol 3-phosphate + NADP(+) = dihydroxyacetone phosphate + NADPH + H(+). It functions in the pathway membrane lipid metabolism; glycerophospholipid metabolism. In terms of biological role, catalyzes the reduction of the glycolytic intermediate dihydroxyacetone phosphate (DHAP) to sn-glycerol 3-phosphate (G3P), the key precursor for phospholipid synthesis. This Novosphingobium aromaticivorans (strain ATCC 700278 / DSM 12444 / CCUG 56034 / CIP 105152 / NBRC 16084 / F199) protein is Glycerol-3-phosphate dehydrogenase [NAD(P)+].